A 282-amino-acid polypeptide reads, in one-letter code: AB hydrolase superfamily protein FGSG_00045 (282 aa).

Residues 1-10 (MAPISSTRPS) show a composition bias toward polar residues. Positions 1 to 22 (MAPISSTRPSHSIAADNPNPTT) are disordered. One can recognise an AB hydrolase-1 domain in the interval 22–270 (TQVNFNTNMT…FADMVKRWII (249 aa)).

Belongs to the AB hydrolase superfamily.

It participates in mycotoxin biosynthesis. In terms of biological role, AB hydrolase superfamily protein; part of the gene cluster that mediates the biosynthesis of gramillins A and B, bicyclic lipopeptides that induce cell death in maize leaves but not in wheat leaves. The nonribosomal peptide synthetase GRA1 incorporates respectively a glutamic adic (Glu), a leucine (Leu), a serine (Ser), a hydroxyglutamine (HOGln), a 2-amino decanoic acid, and 2 cysteins (CysB and CysA). The biosynthesis of 2-amino decanoic acid incorporated in gramillins could be initiated by a fatty acid synthase composed of the alpha and beta subunits FGSG_00036 and FGSG_11656. The cytochrome P450 monooxygenase FGSG_15680 could hydroxylate the fatty acid chain. Subsequent oxidation to the ketone by the oxidoreductase FGSG_00048 and transamination by aminotransferase FGSG_00049 could form 2-amino-decanoic acid. On the other hand, FGSG_15680 could also be responsible for the HO-modified glutamine at the gamma-position. Whether hydroxylation occurs on the fully assembled product or on the Gln residue prior to assembly into the gramillins requires further proof. The thioredoxin FGSG_00043 could also be required for the disulfide-bond formation between CysA and CysB. The specific involvement of the remaining proteins from the cluster is more difficult to discern, but could have broader regulatory (FGSG_00040 and FGSG_11657) or enzymatic functions (FGSG_00044 and FGSG_00045). The final C-domain of GRA1 does not possess the expected sequence of a termination CT domain, often implicated in macrocyclization and release of a cyclopeptidein fungal NRPs; and the thioesterase FGSG_00047 may act in concert with the terminal C-domain of GRA1 to catalyze the formation of the macrocyclic anhydride and release of the products. This Gibberella zeae (strain ATCC MYA-4620 / CBS 123657 / FGSC 9075 / NRRL 31084 / PH-1) (Wheat head blight fungus) protein is AB hydrolase superfamily protein FGSG_00045.